Here is a 314-residue protein sequence, read N- to C-terminus: tRNA-cytidine(32) 2-sulfurtransferase (314 aa).

The PP-loop motif signature appears at 57 to 62 (SGGKDS). 3 residues coordinate [4Fe-4S] cluster: C132, C135, and C223.

Belongs to the TtcA family. In terms of assembly, homodimer. The cofactor is Mg(2+). [4Fe-4S] cluster serves as cofactor.

It is found in the cytoplasm. The enzyme catalyses cytidine(32) in tRNA + S-sulfanyl-L-cysteinyl-[cysteine desulfurase] + AH2 + ATP = 2-thiocytidine(32) in tRNA + L-cysteinyl-[cysteine desulfurase] + A + AMP + diphosphate + H(+). Its pathway is tRNA modification. Functionally, catalyzes the ATP-dependent 2-thiolation of cytidine in position 32 of tRNA, to form 2-thiocytidine (s(2)C32). The sulfur atoms are provided by the cysteine/cysteine desulfurase (IscS) system. The chain is tRNA-cytidine(32) 2-sulfurtransferase from Alkalilimnicola ehrlichii (strain ATCC BAA-1101 / DSM 17681 / MLHE-1).